The chain runs to 210 residues: Orotate phosphoribosyltransferase (210 aa).

Residues Arg96, Lys100, His102, and 122–130 (EDLISTGGS) contribute to the 5-phospho-alpha-D-ribose 1-diphosphate site. Ser126 is a binding site for orotate.

This sequence belongs to the purine/pyrimidine phosphoribosyltransferase family. PyrE subfamily. As to quaternary structure, homodimer. It depends on Mg(2+) as a cofactor.

It catalyses the reaction orotidine 5'-phosphate + diphosphate = orotate + 5-phospho-alpha-D-ribose 1-diphosphate. The protein operates within pyrimidine metabolism; UMP biosynthesis via de novo pathway; UMP from orotate: step 1/2. Functionally, catalyzes the transfer of a ribosyl phosphate group from 5-phosphoribose 1-diphosphate to orotate, leading to the formation of orotidine monophosphate (OMP). The chain is Orotate phosphoribosyltransferase from Streptococcus pneumoniae (strain ATCC BAA-255 / R6).